Consider the following 369-residue polypeptide: tRNA-specific 2-thiouridylase MnmA (369 aa).

Residues 7 to 14 (GISGGVDS) and Met-33 contribute to the ATP site. The segment at 93-95 (NPD) is interaction with target base in tRNA. The Nucleophile role is filled by Cys-98. Cys-98 and Cys-195 are oxidised to a cystine. Gly-123 is a binding site for ATP. Residues 145–147 (KDQ) form an interaction with tRNA region. Cys-195 (cysteine persulfide intermediate) is an active-site residue. Residues 307-308 (RY) form an interaction with tRNA region.

This sequence belongs to the MnmA/TRMU family. In terms of assembly, interacts with TusE.

Its subcellular location is the cytoplasm. It catalyses the reaction S-sulfanyl-L-cysteinyl-[protein] + uridine(34) in tRNA + AH2 + ATP = 2-thiouridine(34) in tRNA + L-cysteinyl-[protein] + A + AMP + diphosphate + H(+). Catalyzes the 2-thiolation of uridine at the wobble position (U34) of tRNA(Lys), tRNA(Glu) and tRNA(Gln), leading to the formation of s(2)U34, the first step of tRNA-mnm(5)s(2)U34 synthesis. Sulfur is provided by IscS, via a sulfur-relay system. Binds ATP and its substrate tRNAs. This is tRNA-specific 2-thiouridylase MnmA from Blochmanniella floridana.